Reading from the N-terminus, the 422-residue chain is UDP-N-acetylglucosamine 1-carboxyvinyltransferase (422 aa).

Phosphoenolpyruvate is bound at residue 23 to 24 (KN). R92 lines the UDP-N-acetyl-alpha-D-glucosamine pocket. The Proton donor role is filled by C116. C116 carries the post-translational modification 2-(S-cysteinyl)pyruvic acid O-phosphothioketal. Residues 121–125 (RPVDL), 161–164 (KVSV), D306, and I328 each bind UDP-N-acetyl-alpha-D-glucosamine.

It belongs to the EPSP synthase family. MurA subfamily.

The protein localises to the cytoplasm. It carries out the reaction phosphoenolpyruvate + UDP-N-acetyl-alpha-D-glucosamine = UDP-N-acetyl-3-O-(1-carboxyvinyl)-alpha-D-glucosamine + phosphate. The protein operates within cell wall biogenesis; peptidoglycan biosynthesis. Its function is as follows. Cell wall formation. Adds enolpyruvyl to UDP-N-acetylglucosamine. The chain is UDP-N-acetylglucosamine 1-carboxyvinyltransferase from Aliivibrio salmonicida (strain LFI1238) (Vibrio salmonicida (strain LFI1238)).